Here is a 344-residue protein sequence, read N- to C-terminus: Arginine N-succinyltransferase (344 aa).

Leu-125 is a binding site for succinyl-CoA. Catalysis depends on His-229, which acts as the Proton donor.

The protein belongs to the arginine N-succinyltransferase family.

It catalyses the reaction succinyl-CoA + L-arginine = N(2)-succinyl-L-arginine + CoA + H(+). The protein operates within amino-acid degradation; L-arginine degradation via AST pathway; L-glutamate and succinate from L-arginine: step 1/5. Functionally, catalyzes the transfer of succinyl-CoA to arginine to produce N(2)-succinylarginine. The chain is Arginine N-succinyltransferase from Shigella boydii serotype 18 (strain CDC 3083-94 / BS512).